The sequence spans 197 residues: Glycerol-3-phosphate acyltransferase (197 aa).

5 helical membrane-spanning segments follow: residues 6-26 (LFIV…AIIV), 58-78 (AITL…AHYL), 82-102 (MLNV…PIFF), 116-136 (ALLA…VFVA), and 157-177 (FYLI…CLWI).

This sequence belongs to the PlsY family. As to quaternary structure, probably interacts with PlsX.

The protein resides in the cell inner membrane. The enzyme catalyses an acyl phosphate + sn-glycerol 3-phosphate = a 1-acyl-sn-glycero-3-phosphate + phosphate. It participates in lipid metabolism; phospholipid metabolism. Catalyzes the transfer of an acyl group from acyl-phosphate (acyl-PO(4)) to glycerol-3-phosphate (G3P) to form lysophosphatidic acid (LPA). This enzyme utilizes acyl-phosphate as fatty acyl donor, but not acyl-CoA or acyl-ACP. The protein is Glycerol-3-phosphate acyltransferase of Ruthia magnifica subsp. Calyptogena magnifica.